Reading from the N-terminus, the 368-residue chain is 4-hydroxy-3-methylbut-2-en-1-yl diphosphate synthase (flavodoxin) (368 aa).

Residues cysteine 268, cysteine 271, cysteine 303, and glutamate 310 each coordinate [4Fe-4S] cluster.

Belongs to the IspG family. The cofactor is [4Fe-4S] cluster.

The enzyme catalyses (2E)-4-hydroxy-3-methylbut-2-enyl diphosphate + oxidized [flavodoxin] + H2O + 2 H(+) = 2-C-methyl-D-erythritol 2,4-cyclic diphosphate + reduced [flavodoxin]. Its pathway is isoprenoid biosynthesis; isopentenyl diphosphate biosynthesis via DXP pathway; isopentenyl diphosphate from 1-deoxy-D-xylulose 5-phosphate: step 5/6. Its function is as follows. Converts 2C-methyl-D-erythritol 2,4-cyclodiphosphate (ME-2,4cPP) into 1-hydroxy-2-methyl-2-(E)-butenyl 4-diphosphate. The protein is 4-hydroxy-3-methylbut-2-en-1-yl diphosphate synthase (flavodoxin) of Bacillus cytotoxicus (strain DSM 22905 / CIP 110041 / 391-98 / NVH 391-98).